A 338-amino-acid chain; its full sequence is MSKLFSEYKLKDVTLKNRIVMSPMCMYSVENKDGIATDFHFAHYVSRAAGGTGLVILEATAVQEVGRISEFDLGLWNDEQVPALKRLVDGLHYHGAKAGIQLAHAGRKAVLPGEIVAPSAIPFDEKSAKPVELTKEAIKEVVADFKRAAYRAKEAGFDVIEIHAAHGYLIHQFLSPITNRREDNYGGPAGNRYKILSDIIKAVKEVWDGPIIVRVSATDYAHGGLQLEDHIPFAKWMKADGVELIDVSTGGLVNVAPPVFPGYQVPFADEIRRGAGIATGALGLITRGEQAEEILCNERADLIIVGRELLRNPYFAKDAAEQLGETIEGPKQYSRAWK.

22-25 (SPMC) serves as a coordination point for FMN. Residue Tyr27 coordinates substrate. FMN contacts are provided by Ala59 and Gln101. 163 to 166 (HAAH) contacts substrate. FMN-binding positions include Arg214 and 306–307 (GR).

This sequence belongs to the NADH:flavin oxidoreductase/NADH oxidase family. NamA subfamily. As to quaternary structure, homotetramer. FMN is required as a cofactor.

It carries out the reaction A + NADPH + H(+) = AH2 + NADP(+). Its function is as follows. Catalyzes the reduction of the double bond of an array of alpha,beta-unsaturated aldehydes and ketones. It also reduces the nitro group of nitroester and nitroaromatic compounds. It could have a role in detoxification processes. This is NADPH dehydrogenase from Listeria monocytogenes serotype 4a (strain HCC23).